The sequence spans 538 residues: Nicotinate phosphoribosyltransferase (538 aa).

Nicotinate is bound by residues Tyr-21 and Thr-210. Phosphohistidine is present on His-213. Arg-318 serves as a coordination point for nicotinate. Thr-380 provides a ligand contact to 5-phospho-alpha-D-ribose 1-diphosphate. At Ser-537 the chain carries Phosphoserine.

It belongs to the NAPRTase family. Homodimer. It depends on Mg(2+) as a cofactor. The cofactor is Mn(2+). Transiently phosphorylated on a His residue during the reaction cycle. Phosphorylation strongly increases the affinity for substrates and increases the rate of nicotinate D-ribonucleotide production. Dephosphorylation regenerates the low-affinity form of the enzyme, leading to product release.

Its subcellular location is the cytoplasm. It localises to the cytosol. The catalysed reaction is nicotinate + 5-phospho-alpha-D-ribose 1-diphosphate + ATP + H2O = nicotinate beta-D-ribonucleotide + ADP + phosphate + diphosphate. It functions in the pathway cofactor biosynthesis; NAD(+) biosynthesis; nicotinate D-ribonucleotide from nicotinate: step 1/1. Functionally, catalyzes the first step in the biosynthesis of NAD from nicotinic acid, the ATP-dependent synthesis of beta-nicotinate D-ribonucleotide from nicotinate and 5-phospho-D-ribose 1-phosphate. Helps prevent cellular oxidative stress via its role in NAD biosynthesis. In Homo sapiens (Human), this protein is Nicotinate phosphoribosyltransferase (NAPRT).